We begin with the raw amino-acid sequence, 343 residues long: tRNA-specific 2-thiouridylase MnmA (343 aa).

ATP is bound by residues 7–14 and methionine 33; that span reads ALSGGVDS. The Nucleophile role is filled by cysteine 87. Cysteine 87 and cysteine 184 are joined by a disulfide. Glycine 111 lines the ATP pocket. The tract at residues 135–137 is interaction with tRNA; it reads KDQ. Catalysis depends on cysteine 184, which acts as the Cysteine persulfide intermediate. The segment at 289–290 is interaction with tRNA; it reads RY.

The protein belongs to the MnmA/TRMU family.

It localises to the cytoplasm. It catalyses the reaction S-sulfanyl-L-cysteinyl-[protein] + uridine(34) in tRNA + AH2 + ATP = 2-thiouridine(34) in tRNA + L-cysteinyl-[protein] + A + AMP + diphosphate + H(+). Its function is as follows. Catalyzes the 2-thiolation of uridine at the wobble position (U34) of tRNA, leading to the formation of s(2)U34. This is tRNA-specific 2-thiouridylase MnmA from Desulforudis audaxviator (strain MP104C).